A 585-amino-acid chain; its full sequence is MAAAAPAAAGEDGRRRLPGAALDIQPQEGAKVEAESGELERLRAELAGALAEMETMKAVAEVSESTKAEAVAAVQRQCQEEVASLQAILKDSISSYEAQITSLKQERQQQQQDCEEKERELGRLKQLLSRAHPLDSLEKQMEKAHEDSEKLREIVLPMEQEIEELKAKLLRAEELIQEIQRRPRHPPSLHGSTELLLSRDPSPPLEPLEELSEDGGPAAEAFAHNCDDSASISSFSLGGGASGRASLPRSRQGLSPEQEETASLVSTGTLVPEGIYLPPPGYQLVPDNQWEQLQLEGRQLQKDLESISRERDELQEGLRRSNEDCAKQMQVLLAQVQNSEQLLRTLQGTVSQAQERVQLQMAELANSHKCLSHEVKRLTEENQGLRAEQPSSSVPRVLEQDEGWEESLPSSLPELQQLVRRTQQEARARQQAQEHEAERLRIEIVTLREALDEETAARASLEGQLRVQREETEVLEASLCSLRMEMERVQEEQSKAKRQEVLRPSQGTGRTEEAQLTDLLSEQRAKMLRLQAELETSEQVQRDFVRLSQALQVRLERIRQAGSLEQVRGIIDEAPLRDVRDIKDT.

Ala2 is modified (N-acetylalanine). Residues 27 to 183 adopt a coiled-coil conformation; sequence QEGAKVEAES…ELIQEIQRRP (157 aa). 3 disordered regions span residues 178 to 265, 381 to 408, and 491 to 515; these read EIQR…ASLV, ENQG…EESL, and EEQS…EEAQ. A phosphoserine mark is found at Ser188, Ser192, Ser198, and Ser202. Residues 288-540 are a coiled coil; sequence NQWEQLQLEG…QAELETSEQV (253 aa). Positions 491–501 are enriched in basic and acidic residues; sequence EEQSKAKRQEV.

Belongs to the rabaptin family. As to quaternary structure, heterodimer with RABGEF1. The dimer binds RAB5A that has been activated by GTP-binding. Interacts with SDCCAG8; this interaction is important for ciliogenesis regulation. Interacts with RAB4; this interaction may mediate VEGFR2 cell surface expression.

The protein localises to the cytoplasm. It is found in the early endosome. It localises to the cytoskeleton. Its subcellular location is the microtubule organizing center. The protein resides in the centrosome. The protein localises to the cilium basal body. Its function is as follows. Plays a role in membrane trafficking and in homotypic early endosome fusion. Participates in arteriogenesis by regulating vascular endothelial growth factor receptor 2/VEGFR2 cell surface expression and endosomal trafficking. By interacting with SDCCAG8, localizes to centrosomes and plays a critical role in ciliogenesis. The protein is Rab GTPase-binding effector protein 2 (RABEP2) of Bos taurus (Bovine).